We begin with the raw amino-acid sequence, 659 residues long: Putative oxidoreductase AegA (659 aa).

4Fe-4S ferredoxin-type domains lie at 3 to 22 (RFIM…EIAC), 47 to 77 (HQQQ…SHVD), 78 to 107 (DSIQ…IVLT), 114 to 147 (VKAT…LVTD), and 218 to 252 (DQAQ…WIEL). Cys-12, Cys-15, Cys-18, Cys-22, Cys-56, Cys-59, Cys-64, Cys-68, Cys-87, Cys-90, Cys-93, Cys-97, Cys-121, Cys-124, Cys-133, Cys-137, Cys-227, Cys-230, Cys-236, and Cys-240 together coordinate [4Fe-4S] cluster.

Requires [4Fe-4S] cluster as cofactor.

Its function is as follows. Involved in formate-dependent uric acid degradation under microaerobic and anaerobic conditions. May reduce the enzymes necessary for uric acid degradation. This chain is Putative oxidoreductase AegA, found in Escherichia coli (strain K12).